A 246-amino-acid polypeptide reads, in one-letter code: Bis(5'-nucleosyl)-tetraphosphatase PrpE [asymmetrical] (246 aa).

Belongs to the PrpE family. It depends on Ni(2+) as a cofactor.

The catalysed reaction is P(1),P(4)-bis(5'-guanosyl) tetraphosphate + H2O = GMP + GTP + 2 H(+). Asymmetrically hydrolyzes Ap4p to yield AMP and ATP. This Bacillus cereus (strain Q1) protein is Bis(5'-nucleosyl)-tetraphosphatase PrpE [asymmetrical].